A 1012-amino-acid chain; its full sequence is MTKHPPNRRGISFEVGAQLEARDRLKNWYPAHIEDIDYEEGKVLIHFKRWNHRYDEWFCWDSPYLRPLEKIQLRKEGLHEEDGSSEFQINEQVLACWSDCRFYPAKVTAVNKDGTYTVKFYDGVVQTVKHIHVKAFSKDQNIVGNARPKETDHKSLSSSPDKREKFKEQRKATVNVKKDKEDKPLKTEKRPKQPDKEGKLICSEKGKVSEKSLPKNEKEDKENISENDREYSGDAQVDKKPENDIVKSPQENLREPKRKRGRPPSIAPTAVDSNSQTLQPITLELRRRKISKGCEVPLKRPRLDKNSSQEKSKNYSENTDKDLSRRRSSRLSTNGTHEILDPDLVVSDLVDTDPLQDTLSSTKESEEGQLKSALEAGQVSSALTCHSFGDGSGAAGLELNCPSMGENTMKTEPTSPLVELQEISTVEVTNTFKKTDDFGSSNAPAVDLDHKFRCKVVDCLKFFRKAKLLHYHMKYFHGMEKSLEPEESPGKRHVQTRGPSASDKPSQETLTRKRVSASSPTTKDKEKNKEKKFKEFVRVKPKKKKKKKKKTKPECPCSEEISDTSQEPSPPKAFAVTRCGSSHKPGVHMSPQLHGPESGHHKGKVKALEEDNLSESSSESFLWSDDEYGQDVDVTTNPDEELDGDDRYDFEVVRCICEVQEENDFMIQCEECQCWQHGVCMGLLEENVPEKYTCYVCQDPPGQRPGFKYWYDKEWLSRGHMHGLAFLEENYSHQNAKKIVATHQLLGDVQRVIEVLHGLQLKMSILQSREHPDLPLWCQPWKQHSGEGRSHFRNIPVTDTRSKEEAPSYRTLNGAVEKPRPLALPLPRSVEESYITSEHCYQKPRAYYPAVEQKLVVETRGSALDDAVNPLHENGDDSLSPRLGWPLDQDRSKGDSDPKPGSPKVKEYVSKKALPEEAPARKLLDRGGEGLLSSQHQWQFNLLTHVESLQDEVTHRMDSIEKELDVLESWLDYTGELEPPEPLARLPQLKHCIKQLLMDLGKVQQIALCCST.

2 consecutive Tudor domains span residues 4–69 (HPPN…RPLE) and 83–147 (GSSE…GNAR). A disordered region spans residues 142–336 (IVGNARPKET…RSSRLSTNGT (195 aa)). Over residues 147-245 (RPKETDHKSL…QVDKKPENDI (99 aa)) the composition is skewed to basic and acidic residues. Ser159 is subject to Phosphoserine. A DNA-binding region (a.T hook) is located at residues 257–269 (KRKRGRPPSIAPT). Over residues 271 to 280 (VDSNSQTLQP) the composition is skewed to polar residues. A compositionally biased stretch (basic and acidic residues) spans 297–325 (PLKRPRLDKNSSQEKSKNYSENTDKDLSR). Residues 452-477 (FRCKVVDCLKFFRKAKLLHYHMKYFH) form a C2H2-type zinc finger. The segment covering 481–490 (KSLEPEESPG) has biased composition (basic and acidic residues). Residues 481-611 (KSLEPEESPG…KGKVKALEED (131 aa)) are disordered. Ser488 carries the post-translational modification Phosphoserine. The span at 497 to 509 (RGPSASDKPSQET) shows a compositional bias: polar residues. Basic and acidic residues predominate over residues 522-538 (TKDKEKNKEKKFKEFVR). Positions 539–551 (VKPKKKKKKKKKT) are enriched in basic residues. The segment at 654–700 (RCICEVQEENDFMIQCEECQCWQHGVCMGLLEENVPEKYTCYVCQDP) adopts a PHD-type zinc-finger fold. Position 843 is an N6-acetyllysine (Lys843). The tract at residues 866–912 (DAVNPLHENGDDSLSPRLGWPLDQDRSKGDSDPKPGSPKVKEYVSKK) is disordered. 2 positions are modified to phosphoserine: Ser878 and Ser880. Basic and acidic residues predominate over residues 888–912 (DQDRSKGDSDPKPGSPKVKEYVSKK).

Homodimer; disulfide-linked. Component of some MLL1/MLL complex, at least composed of the core components KMT2A/MLL1, ASH2L, HCFC1, WDR5 and RBBP5, as well as the facultative components BACC1, CHD8, E2F6, HSP70, INO80C, KANSL1, LAS1L, MAX, MCRS1, MGA, KAT8/MOF, PELP1, PHF20, PRP31, RING2, RUVB1/TIP49A, RUVB2/TIP49B, SENP3, TAF1, TAF4, TAF6, TAF7, TAF9 and TEX10. Component of the NSL complex at least composed of MOF/KAT8, KANSL1, KANSL2, KANSL3, MCRS1, PHF20, OGT1/OGT, WDR5 and HCFC1. Post-translationally, ubiquitinated by TRIM26; leading to proteasomal degradation. As to expression, expressed in heart, kidney, liver, lung, pancreas, placenta, spleen and testis. Not expressed in brain, skeletal muscle, colon, ovary, prostate, small intestine and thymus. Expressed in colon and ovary cancer cell lines while it is not expressed in the respective normal tissues.

The protein localises to the nucleus. Its function is as follows. Methyllysine-binding protein, component of the MOF histone acetyltransferase protein complex. Not required for maintaining the global histone H4 'Lys-16' acetylation (H4K16ac) levels or locus specific histone acetylation, but instead works downstream in transcriptional regulation of MOF target genes. As part of the NSL complex it may be involved in acetylation of nucleosomal histone H4 on several lysine residues. Contributes to methyllysine-dependent p53/TP53 stabilization and up-regulation after DNA damage. In Homo sapiens (Human), this protein is PHD finger protein 20 (PHF20).